A 177-amino-acid chain; its full sequence is Large ribosomal subunit protein uL16 (177 aa).

This sequence belongs to the universal ribosomal protein uL16 family.

This chain is Large ribosomal subunit protein uL16, found in Natronomonas pharaonis (strain ATCC 35678 / DSM 2160 / CIP 103997 / JCM 8858 / NBRC 14720 / NCIMB 2260 / Gabara) (Halobacterium pharaonis).